Here is a 924-residue protein sequence, read N- to C-terminus: LPS-assembly protein LptD (924 aa).

The first 33 residues, 1–33 (MAVKSLVFRRKFPLLVTGSLLALQPVAALTVQA), serve as a signal peptide directing secretion. A disordered region spans residues 58–102 (NLPPRPAHTATSVSTAAAGSSVSGSGGETVEAEPTQRLVTESGGR). The span at 66 to 90 (TATSVSTAAAGSSVSGSGGETVEAE) shows a compositional bias: low complexity.

The protein belongs to the LptD family. In terms of assembly, component of the lipopolysaccharide transport and assembly complex. Interacts with LptE and LptA.

The protein localises to the cell outer membrane. Its function is as follows. Together with LptE, is involved in the assembly of lipopolysaccharide (LPS) at the surface of the outer membrane. In Pseudomonas aeruginosa (strain UCBPP-PA14), this protein is LPS-assembly protein LptD.